The sequence spans 181 residues: MSLRLQEKYEKEVVPALMDKFGYKNIMQAPKLEKIVINMGVGEAKDNPKVLESAVNDLTIITGQKPVLTRAKKSIANFKLRENMAIGCKVTLRKQYMYEFADKLMNVALPRVRDFSGVSDKSFDGRGNYSLGIKEQLIFPEIEYDKIDKVRGMDIVFVTTANTDEEAKELLRLFGMPFAQK.

Belongs to the universal ribosomal protein uL5 family. As to quaternary structure, part of the 50S ribosomal subunit; part of the 5S rRNA/L5/L18/L25 subcomplex. Contacts the 5S rRNA and the P site tRNA. Forms a bridge to the 30S subunit in the 70S ribosome.

Functionally, this is one of the proteins that bind and probably mediate the attachment of the 5S RNA into the large ribosomal subunit, where it forms part of the central protuberance. In the 70S ribosome it contacts protein S13 of the 30S subunit (bridge B1b), connecting the 2 subunits; this bridge is implicated in subunit movement. Contacts the P site tRNA; the 5S rRNA and some of its associated proteins might help stabilize positioning of ribosome-bound tRNAs. The chain is Large ribosomal subunit protein uL5 from Clostridium kluyveri (strain NBRC 12016).